The primary structure comprises 579 residues: MCDQQQIQCRLPLQQCCVKGPSFCSSQSPFAQSQVVVQAPCEMQIVDCPASCPVQVCQVSDQAPCQSQTTQVKCQSKTKQVKGQAQCQSKTTQVKGQAASQSQTSSVQSQAPCQSEVSYVQCEASQPVQTCFVECAPVCYTETCYVECPVQNYVPCPAPQPVQMYRGRPAVCQPQGRFSTQCQYQGSYSSCGPQFQSRATCNNYTPQFQLRPSYSSCFPQYRSRTSFSPCVPQCQTQGSYGSFTEQHRSRSTSRCLPPPRRLQLFPRSCSPPRRFEPCSSSYLPLRPSEGFPNYCTPPRRSEPIYNSRCPRRPISSCSQRRGPKCRIEISSPCCPRQVPPQRCPVEIPPIRRRSQSCGPQPSWGASCPELRPHVEPRPLPSFCPPRRLDQCPESPLQRCPPPAPRPRLRPEPCISLEPRPRPLPRQLSEPCLYPEPLPALRPTPRPVPLPRPGQCEIPEPRPCLQPCEHPEPCPRPEPIPLPAPCPSPEPCRETWRSPSPCWGPNPVPYPGDLGCHESSPHRLDTEAPYCGPSSYNQGQESGAGCGPGDVFPERRGQDGHGDQGNAFAGVKGEAKSAYF.

S394 is subject to Phosphoserine. The disordered stretch occupies residues 526–579; the sequence is EAPYCGPSSYNQGQESGAGCGPGDVFPERRGQDGHGDQGNAFAGVKGEAKSAYF. The segment covering 551–561 has biased composition (basic and acidic residues); sequence FPERRGQDGHG.

Expressed in the upper layer of epidermis and psoriasis (at protein level). Expressed in the upper layer of epidermis and psoriasis.

The protein resides in the cytoplasm. The chain is Keratinocyte proline-rich protein (KPRP) from Homo sapiens (Human).